A 1212-amino-acid chain; its full sequence is DNA-directed RNA polymerase subunit beta (1212 aa).

A compositionally biased stretch (basic and acidic residues) spans 1176–1195; sequence QQEKKKLAEEAAKKDDKSAE. A disordered region spans residues 1176-1212; that stretch reads QQEKKKLAEEAAKKDDKSAEPVDQSDSSTSSDDKVSK.

Belongs to the RNA polymerase beta chain family. In terms of assembly, the RNAP catalytic core consists of 2 alpha, 1 beta, 1 beta' and 1 omega subunit. When a sigma factor is associated with the core the holoenzyme is formed, which can initiate transcription.

It catalyses the reaction RNA(n) + a ribonucleoside 5'-triphosphate = RNA(n+1) + diphosphate. Functionally, DNA-dependent RNA polymerase catalyzes the transcription of DNA into RNA using the four ribonucleoside triphosphates as substrates. This Lactobacillus gasseri (strain ATCC 33323 / DSM 20243 / BCRC 14619 / CIP 102991 / JCM 1131 / KCTC 3163 / NCIMB 11718 / NCTC 13722 / AM63) protein is DNA-directed RNA polymerase subunit beta.